The following is a 351-amino-acid chain: Spermidine/putrescine import ATP-binding protein PotA (351 aa).

The 231-residue stretch at 6 to 236 folds into the ABC transporter domain; it reads LELRNVTKEY…PENAWVANFI (231 aa). 38–45 serves as a coordination point for ATP; it reads GPSGCGKT.

This sequence belongs to the ABC transporter superfamily. Spermidine/putrescine importer (TC 3.A.1.11.1) family. The complex is composed of two ATP-binding proteins (PotA), two transmembrane proteins (PotB and PotC) and a solute-binding protein (PotD).

The protein localises to the cell membrane. The enzyme catalyses ATP + H2O + polyamine-[polyamine-binding protein]Side 1 = ADP + phosphate + polyamineSide 2 + [polyamine-binding protein]Side 1.. Functionally, part of the ABC transporter complex PotABCD involved in spermidine/putrescine import. Responsible for energy coupling to the transport system. This is Spermidine/putrescine import ATP-binding protein PotA from Mycoplasma capricolum subsp. capricolum (strain California kid / ATCC 27343 / NCTC 10154).